The primary structure comprises 962 residues: Leucine--tRNA ligase (962 aa).

A 'HIGH' region motif is present at residues 40-51 (PYPSGAGLHVGH). The 'KMSKS' region motif lies at 737–741 (KMSKS). Lysine 740 lines the ATP pocket.

Belongs to the class-I aminoacyl-tRNA synthetase family.

The protein resides in the cytoplasm. It catalyses the reaction tRNA(Leu) + L-leucine + ATP = L-leucyl-tRNA(Leu) + AMP + diphosphate. In Flavobacterium psychrophilum (strain ATCC 49511 / DSM 21280 / CIP 103535 / JIP02/86), this protein is Leucine--tRNA ligase.